Reading from the N-terminus, the 743-residue chain is Mitochondrial exoribonuclease DSS-1 (743 aa).

A mitochondrion-targeting transit peptide spans 1–67 (MTPRRVAKLV…KELLHLQRSL (67 aa)). In terms of domain architecture, RNB spans 186–542 (THNPAYAIDS…VHHQLKVWLW (357 aa)). The tract at residues 320-357 (VGNQHHHTERESTQASPAKREEGKKGMVASGGTSSCRP) is disordered. Basic and acidic residues predominate over residues 325–344 (HHTERESTQASPAKREEGKK).

This sequence belongs to the RNR ribonuclease family. As to quaternary structure, component of the mitochondrial 3' processome (MPsome) complex composed at least of terminal uridylyltransferase KRET1/TUT1, 3'-5' exonuclease DSS1, MPSS1, MPSS2 and MPSS3. Within the complex, interacts with KRET1 and MPSS2. Component of the mitochondrial degradosome complex composed at least of 3'-5' exonuclease DSS1 and helicase SUV3. Within the complex, interacts with helicase SUV3.

The protein resides in the mitochondrion. The enzyme catalyses Exonucleolytic cleavage in the 3'- to 5'-direction to yield nucleoside 5'-phosphates.. 3'-5'exoribonuclease which is involved in the post-transcriptional processing, editing and degradation of mitochondrial RNAs, including mRNAs, rRNAs and guided RNAs (gRNA). As part of the mitochondrial 3' processome (MPsome), involved in the maturation of guided RNA (gRNA) precursors by catalyzing the processive 3'-5' degradation of uridylated gRNA precursors. Plays a role in the degradation of 12S rRNA processing intermediates and maturation by-products. The chain is Mitochondrial exoribonuclease DSS-1 from Trypanosoma brucei brucei.